We begin with the raw amino-acid sequence, 316 residues long: Ornithine carbamoyltransferase (316 aa).

Carbamoyl phosphate contacts are provided by residues 59–62, Gln86, Arg110, and 137–140; these read STRT and HPCQ. Residues Asn168, Asp232, and 236–237 contribute to the L-ornithine site; that span reads SM. Carbamoyl phosphate is bound by residues 273–274 and Arg301; that span reads CL.

It belongs to the aspartate/ornithine carbamoyltransferase superfamily. OTCase family.

Its subcellular location is the cytoplasm. The catalysed reaction is carbamoyl phosphate + L-ornithine = L-citrulline + phosphate + H(+). It functions in the pathway amino-acid degradation; L-arginine degradation via ADI pathway; carbamoyl phosphate from L-arginine: step 2/2. Functionally, reversibly catalyzes the transfer of the carbamoyl group from carbamoyl phosphate (CP) to the N(epsilon) atom of ornithine (ORN) to produce L-citrulline. The chain is Ornithine carbamoyltransferase from Listeria monocytogenes serotype 4a (strain HCC23).